The primary structure comprises 598 residues: Elongation factor 4 (598 aa).

One can recognise a tr-type G domain in the interval 2–184 (KNIRNFSIIA…EIVAKIPAPE (183 aa)). GTP-binding positions include 14–19 (DHGKST) and 131–134 (NKID).

It belongs to the TRAFAC class translation factor GTPase superfamily. Classic translation factor GTPase family. LepA subfamily.

The protein resides in the cell inner membrane. It catalyses the reaction GTP + H2O = GDP + phosphate + H(+). In terms of biological role, required for accurate and efficient protein synthesis under certain stress conditions. May act as a fidelity factor of the translation reaction, by catalyzing a one-codon backward translocation of tRNAs on improperly translocated ribosomes. Back-translocation proceeds from a post-translocation (POST) complex to a pre-translocation (PRE) complex, thus giving elongation factor G a second chance to translocate the tRNAs correctly. Binds to ribosomes in a GTP-dependent manner. This Haemophilus influenzae (strain ATCC 51907 / DSM 11121 / KW20 / Rd) protein is Elongation factor 4.